The chain runs to 1175 residues: Topoisomerase 1-associated factor 1 (1175 aa).

Disordered stretches follow at residues 894–982 (NYQS…DDEK) and 1043–1175 (SDGD…DDEE). A compositionally biased stretch (basic residues) spans 910 to 921 (AKKRNSRKKSTK). Acidic residues predominate over residues 930-940 (GDSDDDDDDAD). Positions 954-966 (PRDLLFEEPKPLR) are enriched in basic and acidic residues. Residues 1044–1053 (DGDDDDDDGN) are compositionally biased toward acidic residues. The segment covering 1078 to 1096 (ILDSVQSQVLDNGSSQGNF) has biased composition (polar residues). Residues 1137-1156 (EEDDNADEDEDEDEDVDGEE) are compositionally biased toward acidic residues.

This sequence belongs to the timeless family. Component of the fork protection complex (FPC) consisting of TOF1 and CSM3.

It is found in the nucleus. In terms of biological role, forms a fork protection complex (FPC) with CSM3 and which is required for chromosome segregation during meiosis and DNA damage repair. FPC coordinates leading and lagging strand synthesis and moves with the replication fork. FPC stabilizes replication forks in a configuration that is recognized by replication checkpoint sensors. The sequence is that of Topoisomerase 1-associated factor 1 (TOF1) from Lodderomyces elongisporus (strain ATCC 11503 / CBS 2605 / JCM 1781 / NBRC 1676 / NRRL YB-4239) (Yeast).